A 402-amino-acid polypeptide reads, in one-letter code: uncharacterized protein (402 aa).

Residues 1–11 (MTPSNYQRTRW) are Cytoplasmic-facing. Residues 12–34 (LTLIGTIITQFALGSVYTWSLFN) traverse the membrane as a helical segment. At 35–43 (GALSAKLDA) the chain is on the periplasmic side. Residues 44-66 (PVSQVAFSFGLLSLGLAISSSVA) form a helical membrane-spanning segment. Residues 67 to 72 (GKLQER) lie on the Cytoplasmic side of the membrane. The chain crosses the membrane as a helical span at residues 73–95 (FGVKRVTMASGILLGLGFFLTAH). At 96 to 99 (SDNL) the chain is on the periplasmic side. Residues 100–122 (MMLWLSAGVLVGLADGAGYLLTL) form a helical membrane-spanning segment. Topologically, residues 123 to 134 (SNCVKWFPERKG) are cytoplasmic. Residues 135–154 (LISAFAIGSYGLGSLGFKFI) form a helical membrane-spanning segment. The Periplasmic portion of the chain corresponds to 155–168 (DTQLLETVGLEKTF). The helical transmembrane segment at 169-186 (VIWGAIALLMIVFGATLM) threads the bilayer. Over 187–216 (KDAPKQEVKTSNGVVEKDYTLAESMRKPQY) the chain is Cytoplasmic. The chain crosses the membrane as a helical span at residues 217–236 (WMLAVMFLTACMSGLYVIGV). Residues 237–250 (AKDIAQSLAHLDVV) lie on the Periplasmic side of the membrane. Residues 251–273 (SAANAVTVISIANLSGRLVLGIL) form a helical membrane-spanning segment. The Cytoplasmic segment spans residues 274 to 279 (SDKIAR). The chain crosses the membrane as a helical span at residues 280 to 302 (IRVITIGQVISLVGMAALLFAPL). The Periplasmic portion of the chain corresponds to 303–306 (NAVT). The helical transmembrane segment at 307–329 (FFAAIACVAFNFGGTITVFPSLV) threads the bilayer. Over 330–341 (SEFFGLNNLAKN) the chain is Cytoplasmic. A helical transmembrane segment spans residues 342-364 (YGVIYLGFGIGSICGSIIASLFG). Over 365-367 (GFY) the chain is Periplasmic. A helical membrane pass occupies residues 368 to 387 (VTFYVIFALLILSLALSTTI). Residues 388–402 (RQPEQKMLREAHGSL) are Cytoplasmic-facing.

This sequence belongs to the major facilitator superfamily. Interacts with BtsS and YpdA.

It is found in the cell inner membrane. Its function is as follows. Part of a nutrient-sensing regulatory network composed of the two-component regulatory systems BtsS/BtsR and YpdA/YpdB, and their respective target proteins, BtsT and YhjX. This is an uncharacterized protein from Escherichia coli (strain K12).